A 502-amino-acid chain; its full sequence is Archaemetzincin-1 (502 aa).

H262 is a Zn(2+) binding site. E263 (proton acceptor) is an active-site residue. Zn(2+)-binding residues include H266, C273, C278, C297, and C300. Residues 336–383 are disordered; it reads GEPSVSEDTLPFSADSGMGCESDTEPVTSPSEPVTPDGWSHPFPDGPE.

It belongs to the peptidase M54 family. It depends on Zn(2+) as a cofactor.

Probable zinc metalloprotease. This chain is Archaemetzincin-1 (Amz1), found in Mus musculus (Mouse).